A 110-amino-acid chain; its full sequence is Senescence associated gene 20 (110 aa).

The sequence is that of Senescence associated gene 20 from Arabidopsis thaliana (Mouse-ear cress).